The sequence spans 485 residues: Glutamyl-tRNA(Gln) amidotransferase subunit A 1 (485 aa).

Active-site charge relay system residues include lysine 79 and serine 154. The active-site Acyl-ester intermediate is the serine 178.

It belongs to the amidase family. GatA subfamily. As to quaternary structure, heterotrimer of A, B and C subunits.

It catalyses the reaction L-glutamyl-tRNA(Gln) + L-glutamine + ATP + H2O = L-glutaminyl-tRNA(Gln) + L-glutamate + ADP + phosphate + H(+). Its function is as follows. Allows the formation of correctly charged Gln-tRNA(Gln) through the transamidation of misacylated Glu-tRNA(Gln) in organisms which lack glutaminyl-tRNA synthetase. The reaction takes place in the presence of glutamine and ATP through an activated gamma-phospho-Glu-tRNA(Gln). This chain is Glutamyl-tRNA(Gln) amidotransferase subunit A 1 (gatA1), found in Clostridium acetobutylicum (strain ATCC 824 / DSM 792 / JCM 1419 / IAM 19013 / LMG 5710 / NBRC 13948 / NRRL B-527 / VKM B-1787 / 2291 / W).